Consider the following 381-residue polypeptide: Anhydro-N-acetylmuramic acid kinase (381 aa).

ATP is bound at residue 13–20 (GTSLDGID).

It belongs to the anhydro-N-acetylmuramic acid kinase family.

The catalysed reaction is 1,6-anhydro-N-acetyl-beta-muramate + ATP + H2O = N-acetyl-D-muramate 6-phosphate + ADP + H(+). It participates in amino-sugar metabolism; 1,6-anhydro-N-acetylmuramate degradation. Its pathway is cell wall biogenesis; peptidoglycan recycling. In terms of biological role, catalyzes the specific phosphorylation of 1,6-anhydro-N-acetylmuramic acid (anhMurNAc) with the simultaneous cleavage of the 1,6-anhydro ring, generating MurNAc-6-P. Is required for the utilization of anhMurNAc either imported from the medium or derived from its own cell wall murein, and thus plays a role in cell wall recycling. The protein is Anhydro-N-acetylmuramic acid kinase of Francisella tularensis subsp. novicida (strain U112).